Consider the following 630-residue polypeptide: Elongation factor 4 (630 aa).

A disordered region spans residues 1–22 (MTVARNRAGAGPGKGSPISSFA). Residues 30-211 (ARIRNFCIIA…EVVRQVPAPV (182 aa)) form the tr-type G domain. GTP is bound by residues 42 to 47 (DHGKST) and 158 to 161 (NKID).

Belongs to the TRAFAC class translation factor GTPase superfamily. Classic translation factor GTPase family. LepA subfamily.

Its subcellular location is the cell membrane. It carries out the reaction GTP + H2O = GDP + phosphate + H(+). Required for accurate and efficient protein synthesis under certain stress conditions. May act as a fidelity factor of the translation reaction, by catalyzing a one-codon backward translocation of tRNAs on improperly translocated ribosomes. Back-translocation proceeds from a post-translocation (POST) complex to a pre-translocation (PRE) complex, thus giving elongation factor G a second chance to translocate the tRNAs correctly. Binds to ribosomes in a GTP-dependent manner. The protein is Elongation factor 4 of Rhodococcus opacus (strain B4).